A 1485-amino-acid polypeptide reads, in one-letter code: Chromosome partition protein MukB (1485 aa).

34–41 (GGNGAGKS) lines the ATP pocket. Coiled-coil stretches lie at residues 337–480 (LNLV…QAYQ), 509–605 (QHLA…PVWL), 780–805 (RAARENRLETLYQERDRLAERYATLS), 835–915 (EAEI…IQQH), 977–1116 (GMLT…AKAG), and 1210–1235 (EAIEQMEIELGRLTEELTAREQKLAI). Residues 666–783 (PSGAEDARLI…EVPLFGRAAR (118 aa)) are flexible hinge.

This sequence belongs to the SMC family. MukB subfamily. In terms of assembly, homodimerization via its hinge domain. Binds to DNA via its C-terminal region. Interacts, and probably forms a ternary complex, with MukE and MukF via its C-terminal region. The complex formation is stimulated by calcium or magnesium. Interacts with tubulin-related protein FtsZ.

Its subcellular location is the cytoplasm. The protein resides in the nucleoid. In terms of biological role, plays a central role in chromosome condensation, segregation and cell cycle progression. Functions as a homodimer, which is essential for chromosome partition. Involved in negative DNA supercoiling in vivo, and by this means organize and compact chromosomes. May achieve or facilitate chromosome segregation by condensation DNA from both sides of a centrally located replisome during cell division. The protein is Chromosome partition protein MukB of Yersinia pseudotuberculosis serotype O:1b (strain IP 31758).